Reading from the N-terminus, the 220-residue chain is Early protein OPG038 (220 aa).

A signal peptide spans 1–17 (MVYKLVLLFCIASLGYS).

It belongs to the orthopoxvirus OPG038 family. As to quaternary structure, homooligomer. Interacts with host CD80 and CD86 when secreted. In terms of processing, glycosylated by host.

The protein resides in the host endoplasmic reticulum. The protein localises to the secreted. In terms of biological role, plays a role in immune evasion. When secreted, inhibits T-cell activation by preventing the binding of host CD80 and CD86 to soluble CTLA4 and CD28. In the infected cell, may inhibits host NF kappa B activation. This chain is Early protein OPG038 (OPG038), found in Homo sapiens (Human).